The chain runs to 445 residues: Tubulin beta-2 chain (445 aa).

The GTP site is built by Q12, E73, S142, G146, T147, G148, N208, and N230. E73 is a Mg(2+) binding site.

It belongs to the tubulin family. As to quaternary structure, dimer of alpha and beta chains. A typical microtubule is a hollow water-filled tube with an outer diameter of 25 nm and an inner diameter of 15 nM. Alpha-beta heterodimers associate head-to-tail to form protofilaments running lengthwise along the microtubule wall with the beta-tubulin subunit facing the microtubule plus end conferring a structural polarity. Microtubules usually have 13 protofilaments but different protofilament numbers can be found in some organisms and specialized cells. The cofactor is Mg(2+).

The protein localises to the cytoplasm. It is found in the cytoskeleton. Tubulin is the major constituent of microtubules, a cylinder consisting of laterally associated linear protofilaments composed of alpha- and beta-tubulin heterodimers. Microtubules grow by the addition of GTP-tubulin dimers to the microtubule end, where a stabilizing cap forms. Below the cap, tubulin dimers are in GDP-bound state, owing to GTPase activity of alpha-tubulin. In Suillus bovinus (Jersey cow bolete), this protein is Tubulin beta-2 chain (TUBB2).